The chain runs to 687 residues: Adhesion G-protein coupled receptor G1 (687 aa).

The first 25 residues, 1–25, serve as a signal peptide directing secretion; that stretch reads MAVQVLRQMVYFLLSLFSLVQGAHS. 26 to 33 contacts heparin; that stretch reads GSPREDFR. At 26-402 the chain is on the extracellular side; it reads GSPREDFRFC…TEVEATHKHY (377 aa). Disulfide bonds link cysteine 35/cysteine 91 and cysteine 121/cysteine 177. 3 N-linked (GlcNAc...) asparagine glycosylation sites follow: asparagine 39, asparagine 148, and asparagine 171. 190-200 is a binding site for heparin; it reads LQHPQKAAKRP. The region spanning 224 to 395 is the GAIN-B domain; sequence DTLSFEEDRV…AVLMVSSTEV (172 aa). N-linked (GlcNAc...) asparagine glycosylation is found at asparagine 234, asparagine 303, asparagine 324, and asparagine 341. 2 disulfide bridges follow: cysteine 346–cysteine 377 and cysteine 366–cysteine 379. Residues 346 to 395 form a GPS region; sequence CVFWVEDPASSSTGSWSSAGCETVSRDTQTSCLCNHLTYFAVLMVSSTEV. Positions 384 to 397 are stachel; it reads YFAVLMVSSTEVEA. A helical transmembrane segment spans residues 403–423; it reads LTLLSYVGCVISALACVFTIA. At 424–442 the chain is on the cytoplasmic side; the sequence is AYLCSRRKSRDYTIKVHMN. A helical membrane pass occupies residues 443 to 463; sequence LLSAVFLLDVSFLLSEPVALT. Residues 464-471 lie on the Extracellular side of the membrane; that stretch reads GSEAACRT. Residues 472-492 traverse the membrane as a helical segment; sequence SAMFLHFSLLACLSWMGLEGY. Residues 493 to 512 are Cytoplasmic-facing; it reads NLYRLVVEVFGTYVPGYLLK. A helical membrane pass occupies residues 513–533; it reads LSIVGWGFPVFLVTLVALVDV. Residues 534-570 lie on the Extracellular side of the membrane; the sequence is NNYGPIILAVRRTPERVTYPSMCWIRDSLVSYVTNLG. The helical transmembrane segment at 571 to 591 threads the bilayer; it reads LFSLVFLFNLAMLATMVVQIL. At 592–603 the chain is on the cytoplasmic side; that stretch reads RLRPHSQNWPHV. The helical transmembrane segment at 604–624 threads the bilayer; the sequence is LTLLGLSLVLGLPWALVFFSF. At 625 to 630 the chain is on the extracellular side; it reads ASGTFQ. A helical membrane pass occupies residues 631 to 651; the sequence is LVILYLFSIITSFQGFLIFLW. At 652-687 the chain is on the cytoplasmic side; that stretch reads YWSMRFQAQGGPSPLKNNSDSAKLPISSGSTSSSRI. The tract at residues 664 to 687 is disordered; that stretch reads SPLKNNSDSAKLPISSGSTSSSRI. A compositionally biased stretch (low complexity) spans 678–687; it reads SSGSTSSSRI.

Belongs to the G-protein coupled receptor 2 family. LN-TM7 subfamily. Heterodimer of 2 chains generated by proteolytic processing; the large extracellular N-terminal fragment (ADGRG1 NT) and the membrane-bound C-terminal fragment (ADGRG1-CT) predominantly remain associated and non-covalently linked. ADGRG1 NT self-associates in a trans-trans manner; the homophilic interaction enhances receptor signaling. Interacts with TGM2. Interacts with heparin; leading to the reduction of ADGRG1 shedding. Interacts with COL3A1. Part of a GPCR-tetraspanin complex at least consisting of ADGRG1, CD81, eventually CD9, and GNA11 in which CD81 is enhancing the association of ADGRG1 with GNA11. In terms of processing, autoproteolytically cleaved into 2 fragments; the large extracellular N-terminal fragment and the membroune-bound C-terminal fragment predominantly remain associated and non-covalently linked. N-glycosylated. The secreted ADGRG1 N-terminal fragment is heavily glycosylated. Post-translationally, ubiquitinated. Undergoes polyubiquitination upon activation. Expressed in neural progenitor cells in fetal forbrain. Expressed in migrating neurons. Expressed in radial glial endfeet (at protein level). Expressed in peritubular myoid cells, Sertoli cells, and germ cells of the testis.

It localises to the cell membrane. It is found in the secreted. Its subcellular location is the membrane raft. Its activity is regulated as follows. Forms a heterodimer of 2 chains generated by proteolytic processing that remain associated through non-covalent interactions mediated by the GAIN-B domain. In the inactivated receptor, the Stachel sequence (also named stalk) is embedded in the GAIN-B domain, where it adopts a beta-strand conformation. On activation, the Stachel moves into the 7 transmembrane region and adopts a twisted hook-shaped configuration that forms contacts within the receptor, leading to coupling of a G-alpha protein, which activates signaling. The cleaved GAIN-B and N-terminal domains can then dissociate from the rest of the receptor. Activated by the small-molecule agonist, 3-alpha-acetoxydihydrodeoxygedunin (3-alpha-DOG). Adhesion G-protein coupled receptor (aGPCR) for steroid hormone 17alpha-hydroxypregnenolone (17-OH), which is involved in cell adhesion and cell-cell interactions. Ligand binding causes a conformation change that triggers signaling via guanine nucleotide-binding proteins (G proteins) and modulates the activity of downstream effectors, such as RhoA pathway. ADGRG1 is coupled to G(12) and/or G(13) G proteins (GNA12 and GNA13, respectively) and mediates the activation Rho small GTPases. Acts as a potent suppressor of ferroptosis: binding to 17-OH-binding initiates signaling that down-regulates CD36 and alleviates ferroptosis-induced liver injury. Ligand-binding also induces cell adhesion activity via association with proteins such as collagen III/COL3A1 and TGM2. Mediates cell matrix adhesion in developing neurons and hematopoietic stem cells. Involved in cortical development, specifically in maintenance of the pial basement membrane integrity and in cortical lamination: association with COL3A1 in the developing brain inhibits neuronal migration via activation of the RhoA pathway. Together with TGM2, acts as a regulator of myelination and myelin repair in oligodendrocyte precursor cells. Acts as a hemostatic sensor of shear force: G protein-coupled receptor signaling is activated in response to shear force in platelets, promoting G(13) G protein signaling, and platelet shape change and aggregation in a COL3A1-dependent manner. Acts as an inhibitor of VEGFA production thereby inhibiting angiogenesis through a signaling pathway mediated by PRKCA. Plays a role in the maintenance of hematopoietic stem cells in bone marrow niche. Plays an essential role in testis development. Its function is as follows. Adhesion G-protein coupled receptor (aGPCR) for phosphatidylserine, which is involved in microglia-mediated synapse pruning during development. Required to maintain appropriate synaptic numbers in several brain regions in a time- and circuit-dependent fashion: phosphatidylserine-binding acts as a 'eat-me' signal for apoptotic cells, leading to microglial engulfment of phosphatidylserine-positive synapses. This is Adhesion G-protein coupled receptor G1 from Mus musculus (Mouse).